The chain runs to 438 residues: MTRLPKQGLLLLQSLALLSSAFGNIIPNTDNCCILDGRFGEYCPTTCGISDFLNRYQENVDTDLQYLENLLTQISNSTSGTTIIVEHLIDSGKKPATSPQTAIDPMTQKSKTCWMKLTDMKNYYQYEENILYLQEVYSSNQNKIFLLKQKIANLELQCQQPCRDTVQIQEFTGKDCQEVANKGARLSGLYYIKPLKAKQQFLVYCEIEPSGSAWTVIQRRLDGSVNFHKNWVQYREGFGYLSPNDKTEFWLGNEKIHLLSTQSTIPYVMRIELEDWSNQKSTADYSTFRLGSEKDNYRFTYAYFIGGDAGDAFDGFDFGDDPSDKFYTSHNGMQFSTFDKDNDKFDGNCAEQDGSGWWMNRCHAAHLNGKYYQGGTYSEADSGPSGYDNGIIWATWRRRWYSMKSVTMKIMPLNRYGAEGQQTLGGSKKSDFENRGDF.

Positions 1 to 25 (MTRLPKQGLLLLQSLALLSSAFGNI) are cleaved as a signal peptide. Asparagine 76 carries an N-linked (GlcNAc...) asparagine glycan. The region spanning 167 to 414 (QIQEFTGKDC…SVTMKIMPLN (248 aa)) is the Fibrinogen C-terminal domain. Cysteine 176 and cysteine 205 form a disulfide bridge. The Ca(2+) site is built by aspartate 341, aspartate 343, and glycine 347. The cysteines at positions 349 and 362 are disulfide-linked.

Heterohexamer; disulfide linked. Contains 2 sets of 3 non-identical chains (alpha, beta and gamma). The 2 heterotrimers are in head to head conformation with the N-termini in a small central domain. In terms of processing, conversion of fibrinogen to fibrin is triggered by thrombin, which cleaves fibrinopeptides A and B from alpha and beta chains, and thus exposes the N-terminal polymerization sites responsible for the formation of the soft clot. The soft clot is converted into the hard clot by factor XIIIA which catalyzes the epsilon-(gamma-glutamyl)lysine cross-linking between gamma chains (stronger) and between alpha chains (weaker) of different monomers.

The protein resides in the secreted. Together with fibrinogen alpha (FGA) and fibrinogen beta (FGB), polymerizes to form an insoluble fibrin matrix. Has a major function in hemostasis as one of the primary components of blood clots. This Xenopus laevis (African clawed frog) protein is Fibrinogen gamma chain (fgg).